The chain runs to 408 residues: Metacaspase-1B (408 aa).

Residues 1–98 (MYHRHSAPPP…PPLEAQQFGN (98 aa)) form a disordered region. Composition is skewed to pro residues over residues 24 to 49 (WPPPQPYEYPPYPPQGPPPAHTFPPP) and 56 to 66 (SPYPTPPPHSP). Active-site residues include H199 and C255.

It belongs to the peptidase C14B family.

In terms of biological role, involved in cell death (apoptosis). Required for the apoptotic-like loss of membrane phospholipid asymmetry at stationary phase and facilitates growth under conditions of endoplasmic reticulum stress. The sequence is that of Metacaspase-1B (casB) from Aspergillus fumigatus (strain CBS 144.89 / FGSC A1163 / CEA10) (Neosartorya fumigata).